Here is an 84-residue protein sequence, read N- to C-terminus: MRYAIVFFLVCVITLGEALKCVNLQANGIKMTQECAKEDTKCLTLRSLKKTLKFCASGRTCTTMKIMSLPGEQITCCEGNMCNA.

The signal sequence occupies residues 1-18; the sequence is MRYAIVFFLVCVITLGEA. 4 disulfide bridges follow: cysteine 21/cysteine 42, cysteine 35/cysteine 55, cysteine 61/cysteine 76, and cysteine 77/cysteine 82.

As to expression, expressed by the skin dorsal glands.

Its subcellular location is the secreted. In terms of biological role, lacks alpha-neurotoxic activity, has apparently no antibacterial activity, nor anti-coagulant potency. In Xenopus laevis (African clawed frog), this protein is Xenoxin-1 (xenoxin-1).